We begin with the raw amino-acid sequence, 188 residues long: Large ribosomal subunit protein bL35m (188 aa).

It belongs to the bacterial ribosomal protein bL35 family.

It localises to the mitochondrion. The sequence is that of Large ribosomal subunit protein bL35m (Mrpl35) from Mus musculus (Mouse).